A 482-amino-acid polypeptide reads, in one-letter code: Glycogen synthase (482 aa).

Lys-15 contributes to the ADP-alpha-D-glucose binding site.

This sequence belongs to the glycosyltransferase 1 family. Bacterial/plant glycogen synthase subfamily.

It carries out the reaction [(1-&gt;4)-alpha-D-glucosyl](n) + ADP-alpha-D-glucose = [(1-&gt;4)-alpha-D-glucosyl](n+1) + ADP + H(+). It participates in glycan biosynthesis; glycogen biosynthesis. Its function is as follows. Synthesizes alpha-1,4-glucan chains using ADP-glucose. The sequence is that of Glycogen synthase from Elusimicrobium minutum (strain Pei191).